The chain runs to 388 residues: Succinate--CoA ligase [ADP-forming] subunit beta (388 aa).

Residues 9–244 (KQLFAEYGLP…PSQEDSREAH (236 aa)) form the ATP-grasp domain. Residues Lys46, 53-55 (GRG), Glu99, Thr102, and Glu107 contribute to the ATP site. Mg(2+) contacts are provided by Asn199 and Asp213. Residues Asn264 and 321-323 (GIV) contribute to the substrate site.

It belongs to the succinate/malate CoA ligase beta subunit family. In terms of assembly, heterotetramer of two alpha and two beta subunits. The cofactor is Mg(2+).

The enzyme catalyses succinate + ATP + CoA = succinyl-CoA + ADP + phosphate. The catalysed reaction is GTP + succinate + CoA = succinyl-CoA + GDP + phosphate. The protein operates within carbohydrate metabolism; tricarboxylic acid cycle; succinate from succinyl-CoA (ligase route): step 1/1. Functionally, succinyl-CoA synthetase functions in the citric acid cycle (TCA), coupling the hydrolysis of succinyl-CoA to the synthesis of either ATP or GTP and thus represents the only step of substrate-level phosphorylation in the TCA. The beta subunit provides nucleotide specificity of the enzyme and binds the substrate succinate, while the binding sites for coenzyme A and phosphate are found in the alpha subunit. The chain is Succinate--CoA ligase [ADP-forming] subunit beta from Pseudoalteromonas translucida (strain TAC 125).